Here is a 123-residue protein sequence, read N- to C-terminus: Probable histone H2B 3 (123 aa).

Residues 1-31 (MAPPKPSAKGAKKAAKTVSKPKDGKKRKHAR) form a disordered region. An O-linked (GlcNAc) serine glycan is attached at serine 110. Lysine 118 is covalently cross-linked (Glycyl lysine isopeptide (Lys-Gly) (interchain with G-Cter in ubiquitin)).

This sequence belongs to the histone H2B family. The nucleosome is a histone octamer containing two molecules each of H2A, H2B, H3 and H4 assembled in one H3-H4 heterotetramer and two H2A-H2B heterodimers. The octamer wraps approximately 147 bp of DNA. Monoubiquitination of Lys-118 gives a specific tag for epigenetic transcriptional activation and is also prerequisite for histone H3 'Lys-4' and 'Lys-79' methylation. Post-translationally, glcNAcylation at Ser-110 promotes monoubiquitination of Lys-118. It fluctuates in response to extracellular glucose, and associates with transcribed genes.

Its subcellular location is the nucleus. The protein resides in the chromosome. In terms of biological role, core component of nucleosome. Nucleosomes wrap and compact DNA into chromatin, limiting DNA accessibility to the cellular machineries which require DNA as a template. Histones thereby play a central role in transcription regulation, DNA repair, DNA replication and chromosomal stability. DNA accessibility is regulated via a complex set of post-translational modifications of histones, also called histone code, and nucleosome remodeling. This chain is Probable histone H2B 3 (his-41), found in Caenorhabditis elegans.